Consider the following 69-residue polypeptide: Small integral membrane protein 20 (69 aa).

The Mitochondrial matrix segment spans residues 1–8 (MAAARNLR). The helical transmembrane segment at 9–29 (TALIFGGFISMVGAAFYPIYF) threads the bilayer. Over 30–69 (RPLLRLEEYQKEQAVNRAGIVQEDVQPPGLKVWSDPFGRK) the chain is Mitochondrial intermembrane. Phenylalanine 66 carries the phenylalanine amide modification.

In terms of assembly, component of the MITRAC (mitochondrial translation regulation assembly intermediate of cytochrome c oxidase complex) complex, the core components of this complex being Coa3/Mitrac12 and Cox14. Interacts with Coa3/Mitrac12 and Cox4i1. Directly interacts with newly synthesized Mt-Co1/Cox1. As to expression, highly expressed in the hypothalamus, substantia nigra reticulata, Edinger-Westphal nucleus, and nucleus of the solitary tract/dorsal motor nucleus of the vagus, the spinal cord, and sensory ganglia (at protein level). Also expressed in the heart, thymus, esophagus, stomach, spleen, lung, pituitary gland, kidney, jejunum, duodenum, ileum, cerebrum, pons, and colon (at protein level). Expressed in preadipocytes and apidocytes (at protein level). Expressed in pancreatic islet cells (at protein level).

It localises to the mitochondrion inner membrane. It is found in the secreted. In terms of biological role, component of the MITRAC (mitochondrial translation regulation assembly intermediate of cytochrome c oxidase complex) complex, that regulates cytochrome c oxidase assembly. Promotes the progression of complex assembly after the association of Mt-Co1/Cox11 with Cox4I1 and Cox6c. Chaperone-like assembly factor required to stabilize newly synthesized Mt-Co1/Cox1 and to prevent its premature turnover. Functionally, peptide involved in a broad spectrum of regulatory functions. Is a ligand for GPR173. As part of the reproductive cycle, it regulates gonadotropin-releasing hormone (GnRH) signaling in the hypothalamus and pituitary gland which augments the release of luteinizing hormone. More specifically, it regulates the expression of transcription factors CEBPB and POU2F1/OCT1 through the cAMP-PKA signaling pathway, which subsequently regulate the expression of GNRHR and KISS1. Plays a protective role in memory retention through activation of GNRHR. Regulates the secretion of AVP by hypothalamic neurons. Plays a role in the transduction of the itch sensation. Induces anxiolytic effects, reducing behavior associated with anxiety. Regulates food intake as well as satiation and satiety by increasing NUCB2 expression in neurons. In the ovary, it regulates follicular growth by stimulating granulosa cell proliferation by increasing the expression of GPR173, CREB1, CYP19A1, KITLG, FSHR, and LHCGR. It also increases the production of estradiol (E2). In the heart, it regulates contractility and relaxation by activating the AKT1-NOS3 and MAPK1-MAPK3 signaling pathways. It also plays a cardioprotective role during ischemia, where it activates the SAFE and RISK pathways. Stimulates the proliferation and differentiation of preadipocytes. In pancreatic islet cells, it induces proliferation of islet cells as well as the production of INS1 and INS2 through activation of the MAPK1-MAPK3 signaling pathways. The protein is Small integral membrane protein 20 of Rattus norvegicus (Rat).